We begin with the raw amino-acid sequence, 217 residues long: Uracil-DNA glycosylase (217 aa).

Aspartate 62 serves as the catalytic Proton acceptor.

The protein belongs to the uracil-DNA glycosylase (UDG) superfamily. UNG family.

Its subcellular location is the cytoplasm. It catalyses the reaction Hydrolyzes single-stranded DNA or mismatched double-stranded DNA and polynucleotides, releasing free uracil.. Excises uracil residues from the DNA which can arise as a result of misincorporation of dUMP residues by DNA polymerase or due to deamination of cytosine. This is Uracil-DNA glycosylase from Streptococcus equi subsp. equi (strain 4047).